A 1032-amino-acid polypeptide reads, in one-letter code: Probable LRR receptor-like serine/threonine-protein kinase At1g56130 (1032 aa).

An N-terminal signal peptide occupies residues M1 to S29. The Extracellular portion of the chain corresponds to Q30–G636. N-linked (GlcNAc...) asparagine glycans are attached at residues N31, N61, and N95. 10 LRR repeats span residues I101–L122, T123–L146, R148–L170, T171–C194, K196–N217, W242–N265, M290–H314, S315–L338, Q340–T360, and Q361–S385. N-linked (GlcNAc...) asparagine glycosylation is present at N145. N-linked (GlcNAc...) asparagine glycosylation occurs at N182. Residues N265, N302, N337, N348, and N352 are each glycosylated (N-linked (GlcNAc...) asparagine). 3 N-linked (GlcNAc...) asparagine glycosylation sites follow: N394, N580, and N633. Residues T637 to F657 form a helical membrane-spanning segment. The Cytoplasmic segment spans residues T658–R1032. T683 bears the Phosphothreonine mark. Residues F694–I968 enclose the Protein kinase domain. ATP is bound by residues L700 to V708 and K722. Y767 bears the Phosphotyrosine mark. The active-site Proton acceptor is D818. Residues S822 and S851 each carry the phosphoserine modification. Phosphothreonine occurs at positions 852 and 857. Y865 bears the Phosphotyrosine mark. The tract at residues A1008–R1032 is disordered.

Belongs to the protein kinase superfamily. Ser/Thr protein kinase family.

It is found in the cell membrane. It catalyses the reaction L-seryl-[protein] + ATP = O-phospho-L-seryl-[protein] + ADP + H(+). The enzyme catalyses L-threonyl-[protein] + ATP = O-phospho-L-threonyl-[protein] + ADP + H(+). In Arabidopsis thaliana (Mouse-ear cress), this protein is Probable LRR receptor-like serine/threonine-protein kinase At1g56130.